The following is a 375-amino-acid chain: MQCALYDAGRCRSCQWITQPIPEQLSAKTADLKNLLADFPVEEWCAPVSGPEQGFRNKAKMVVSGSVEKPLLGMLHRDGTPEDLCDCPLYPASFAPVFAALKPFIARAGLTPYNVARKRGELKYILLTESQSDGGMMLRFVLRSETKLAQLRKALPWLQAQLPQLKVITVNIQPVHMAIMEGETEIYLTEQQALVERFNDVPLWIRPQSFFQTNPAVASQLYATARDWVRQLPVKHMWDLFCGVGGFGLHCATPDMQLTGIEIALEAIACAKQSAAELGLTRLQFQALDSTQFATAQGEVPELVLVNPPRRGIGKPLCDYLSTMAPRFIIYSSCNAQTMAKDIRELPGYRIERVQLFDMFPHTAHYEVLTLLVKM.

The [4Fe-4S] cluster site is built by cysteine 3, cysteine 11, cysteine 14, and cysteine 87. Glutamine 212, phenylalanine 241, glutamate 262, and asparagine 307 together coordinate S-adenosyl-L-methionine. Cysteine 334 serves as the catalytic Nucleophile.

It belongs to the class I-like SAM-binding methyltransferase superfamily. RNA M5U methyltransferase family. RlmC subfamily.

It catalyses the reaction uridine(747) in 23S rRNA + S-adenosyl-L-methionine = 5-methyluridine(747) in 23S rRNA + S-adenosyl-L-homocysteine + H(+). Its function is as follows. Catalyzes the formation of 5-methyl-uridine at position 747 (m5U747) in 23S rRNA. The protein is 23S rRNA (uracil(747)-C(5))-methyltransferase RlmC of Escherichia coli O157:H7.